The chain runs to 464 residues: Methylenetetrahydrofolate--tRNA-(uracil-5-)-methyltransferase TrmFO (464 aa).

13 to 18 (GGGLAG) lines the FAD pocket.

It belongs to the MnmG family. TrmFO subfamily. The cofactor is FAD.

It localises to the cytoplasm. The catalysed reaction is uridine(54) in tRNA + (6R)-5,10-methylene-5,6,7,8-tetrahydrofolate + NADH + H(+) = 5-methyluridine(54) in tRNA + (6S)-5,6,7,8-tetrahydrofolate + NAD(+). It carries out the reaction uridine(54) in tRNA + (6R)-5,10-methylene-5,6,7,8-tetrahydrofolate + NADPH + H(+) = 5-methyluridine(54) in tRNA + (6S)-5,6,7,8-tetrahydrofolate + NADP(+). Functionally, catalyzes the folate-dependent formation of 5-methyl-uridine at position 54 (M-5-U54) in all tRNAs. This chain is Methylenetetrahydrofolate--tRNA-(uracil-5-)-methyltransferase TrmFO, found in Bartonella bacilliformis (strain ATCC 35685 / KC583 / Herrer 020/F12,63).